The chain runs to 971 residues: UPF0182 protein RER_22310 (971 aa).

Helical transmembrane passes span 16-36 (ILLVVAVVVAALLLVGPRLIG), 61-81 (FVLFLVVGIVVGAIVWLAMLL), 112-132 (LFGVIIPVAIGILSGLIAQAN), 172-192 (WLFVSILLAFVANLVTHYVFG), 209-229 (VQLAVIAGTFVLLKAVAYWFD), 257-277 (AKLILLSIAVICALAFFASIF), and 286-306 (MAVALLVLSSVLVGAVYPMIV). Residues 890–927 (GSAATVTQPAPDPDTGAQPETPTTPTAPAPPASSDDVT) form a disordered region.

Belongs to the UPF0182 family.

It localises to the cell membrane. The protein is UPF0182 protein RER_22310 of Rhodococcus erythropolis (strain PR4 / NBRC 100887).